Reading from the N-terminus, the 247-residue chain is Adenosylcobinamide-GDP ribazoletransferase (247 aa).

The next 5 helical transmembrane spans lie at 34-54 (IVMFPFIGLILGGVSGLIFIL), 59-79 (CGIPLAALFCILALALLTGGF), 113-133 (GGLALIFVLLTKILVVSELAL), 138-158 (MLAALAAACAAGRGSAVLLMY), and 187-207 (LAVIVATVLLPGMQGLAAMVV).

It belongs to the CobS family. It depends on Mg(2+) as a cofactor.

It is found in the cell inner membrane. The enzyme catalyses alpha-ribazole + adenosylcob(III)inamide-GDP = adenosylcob(III)alamin + GMP + H(+). It carries out the reaction alpha-ribazole 5'-phosphate + adenosylcob(III)inamide-GDP = adenosylcob(III)alamin 5'-phosphate + GMP + H(+). It functions in the pathway cofactor biosynthesis; adenosylcobalamin biosynthesis; adenosylcobalamin from cob(II)yrinate a,c-diamide: step 7/7. Functionally, joins adenosylcobinamide-GDP and alpha-ribazole to generate adenosylcobalamin (Ado-cobalamin). Also synthesizes adenosylcobalamin 5'-phosphate from adenosylcobinamide-GDP and alpha-ribazole 5'-phosphate. In Salmonella choleraesuis (strain SC-B67), this protein is Adenosylcobinamide-GDP ribazoletransferase.